Reading from the N-terminus, the 310-residue chain is tRNA dimethylallyltransferase (310 aa).

An ATP-binding site is contributed by 13-20 (GPTASGKT). 15-20 (TASGKT) provides a ligand contact to substrate. 4 interaction with substrate tRNA regions span residues 38-41 (DSAL), 162-166 (QRLSR), 243-248 (RCVGYR), and 276-283 (KRQITWLR).

This sequence belongs to the IPP transferase family. In terms of assembly, monomer. The cofactor is Mg(2+).

It catalyses the reaction adenosine(37) in tRNA + dimethylallyl diphosphate = N(6)-dimethylallyladenosine(37) in tRNA + diphosphate. In terms of biological role, catalyzes the transfer of a dimethylallyl group onto the adenine at position 37 in tRNAs that read codons beginning with uridine, leading to the formation of N6-(dimethylallyl)adenosine (i(6)A). This is tRNA dimethylallyltransferase from Aliivibrio fischeri (strain MJ11) (Vibrio fischeri).